A 511-amino-acid polypeptide reads, in one-letter code: Histidine ammonia-lyase (511 aa).

Residues 144-146 (ASG) constitute a cross-link (5-imidazolinone (Ala-Gly)). Ser145 is subject to 2,3-didehydroalanine (Ser).

This sequence belongs to the PAL/histidase family. In terms of processing, contains an active site 4-methylidene-imidazol-5-one (MIO), which is formed autocatalytically by cyclization and dehydration of residues Ala-Ser-Gly.

It is found in the cytoplasm. It carries out the reaction L-histidine = trans-urocanate + NH4(+). It participates in amino-acid degradation; L-histidine degradation into L-glutamate; N-formimidoyl-L-glutamate from L-histidine: step 1/3. The polypeptide is Histidine ammonia-lyase (Halalkalibacterium halodurans (strain ATCC BAA-125 / DSM 18197 / FERM 7344 / JCM 9153 / C-125) (Bacillus halodurans)).